A 263-amino-acid polypeptide reads, in one-letter code: ATP synthase subunit delta (263 aa).

This sequence belongs to the ATPase delta chain family. In terms of assembly, F-type ATPases have 2 components, F(1) - the catalytic core - and F(0) - the membrane proton channel. F(1) has five subunits: alpha(3), beta(3), gamma(1), delta(1), epsilon(1). F(0) has three main subunits: a(1), b(2) and c(10-14). The alpha and beta chains form an alternating ring which encloses part of the gamma chain. F(1) is attached to F(0) by a central stalk formed by the gamma and epsilon chains, while a peripheral stalk is formed by the delta and b chains.

The protein localises to the cell membrane. Functionally, f(1)F(0) ATP synthase produces ATP from ADP in the presence of a proton or sodium gradient. F-type ATPases consist of two structural domains, F(1) containing the extramembraneous catalytic core and F(0) containing the membrane proton channel, linked together by a central stalk and a peripheral stalk. During catalysis, ATP synthesis in the catalytic domain of F(1) is coupled via a rotary mechanism of the central stalk subunits to proton translocation. In terms of biological role, this protein is part of the stalk that links CF(0) to CF(1). It either transmits conformational changes from CF(0) to CF(1) or is implicated in proton conduction. This is ATP synthase subunit delta from Cutibacterium acnes (strain DSM 16379 / KPA171202) (Propionibacterium acnes).